We begin with the raw amino-acid sequence, 547 residues long: Cilia- and flagella- associated protein 210 (547 aa).

Coiled-coil stretches lie at residues 50-131 (ERIR…RKKA), 183-251 (VKLN…MKKN), and 342-405 (IARD…KADK). A disordered region spans residues 214–237 (KQIEEHKEEEEARKKSEEKDAEEM).

Microtubule inner protein component of sperm flagellar doublet microtubules.

It is found in the cytoplasm. Its subcellular location is the cytoskeleton. The protein localises to the cilium axoneme. It localises to the flagellum axoneme. Microtubule inner protein (MIP) part of the dynein-decorated doublet microtubules (DMTs) in cilia axoneme, which is required for motile cilia beating. The polypeptide is Cilia- and flagella- associated protein 210 (Cfap210) (Mus musculus (Mouse)).